Reading from the N-terminus, the 426-residue chain is Zinc finger CCCH domain-containing protein 15 (426 aa).

A compositionally biased stretch (low complexity) spans 1–12; the sequence is MPPKKQAQAGGS. 2 disordered regions span residues 1-30 and 53-74; these read MPPKKQAQAGGSKKAEQKKKEKIIEDKTFG and GQQNPRQVAQSEAEKKLKKDDK. The segment covering 13 to 29 has biased composition (basic and acidic residues); the sequence is KKAEQKKKEKIIEDKTF. The segment covering 53-62 has biased composition (polar residues); sequence GQQNPRQVAQ. A coiled-coil region spans residues 61-86; the sequence is AQSEAEKKLKKDDKKKELQELNELFK. A compositionally biased stretch (basic and acidic residues) spans 64-74; it reads EAEKKLKKDDK. 2 consecutive C3H1-type zinc fingers follow at residues 99-126 and 174-212; these read DPKSVVCAFFKQGQCTKGDKCKFSHDLT and PKTQIVCKHFLEAIENNKYGWFWVCPGGGDICMYRHALP. The stretch at 218–285 forms a coiled coil; it reads KKDKKKEEKE…RRKADFKAGK (68 aa). S231 bears the Phosphoserine mark. The interval 236–260 is required for interaction with DRG1; that stretch reads IERERSALGPNVTKITLESFLAWKK. The tract at residues 299–326 is disordered; the sequence is PELVNDDDEEADDTRYTQGTGGDEVDDS. S351, S360, and S381 each carry phosphoserine. The tract at residues 358–411 is disordered; the sequence is YTSDKDENKLSEASGGRAENGERSDLEEDNEREGTENGAIDAVPVDENLFTGED.

The protein belongs to the ZC3H15/TMA46 family. Interacts with DRG1; this interaction prevents DRG1 poly-ubiquitination and degradation by proteasome. DRG1-ZC3H15/DFRP1 complex co-sediments with polysomes. Associates with microtubules.

The protein resides in the cytoplasm. It is found in the nucleus. Protects DRG1 from proteolytic degradation. Stimulates DRG1 GTPase activity likely by increasing the affinity for the potassium ions. The sequence is that of Zinc finger CCCH domain-containing protein 15 (ZC3H15) from Homo sapiens (Human).